The following is a 594-amino-acid chain: Jacalin-related lectin 44 (594 aa).

Residues M1 to G23 are disordered. Jacalin-type lectin domains lie at I2–S148, P151–T293, P296–P441, and V448–P588. A compositionally biased stretch (basic and acidic residues) spans I10–G23.

This sequence belongs to the jacalin lectin family.

This Arabidopsis thaliana (Mouse-ear cress) protein is Jacalin-related lectin 44 (JAL44).